A 382-amino-acid chain; its full sequence is DNA double-strand break repair protein Mre11 (382 aa).

Residues Asp-8, His-10, Asp-49, and Asp-84 each coordinate Mn(2+). Residue His-85 is the Proton donor of the active site. Residues His-156, His-187, and His-189 each coordinate Mn(2+).

This sequence belongs to the MRE11/RAD32 family. As to quaternary structure, homodimer. Forms a heterotetramer composed of two Mre11 subunits and two Rad50 subunits. Interacts with Rad50 and HerA. Mn(2+) is required as a cofactor.

Its activity is regulated as follows. Nuclease activity is regulated by Rad50. Part of the Rad50/Mre11 complex, which is involved in the early steps of DNA double-strand break (DSB) repair. The complex may facilitate opening of the processed DNA ends to aid in the recruitment of HerA and NurA. Mre11 binds to DSB ends and has both double-stranded 3'-5' exonuclease activity and single-stranded endonuclease activity. Recruited immediately to chromosomal DNA after gamma irradiation, and remains DNA bound in the course of DNA repair. The polypeptide is DNA double-strand break repair protein Mre11 (Sulfolobus acidocaldarius (strain ATCC 33909 / DSM 639 / JCM 8929 / NBRC 15157 / NCIMB 11770)).